The primary structure comprises 512 residues: 2,3-bisphosphoglycerate-independent phosphoglycerate mutase (512 aa).

Mn(2+) contacts are provided by Asp-14 and Ser-64. Ser-64 serves as the catalytic Phosphoserine intermediate. Residues His-125, 155–156, Arg-187, Arg-193, 259–262, and Lys-332 contribute to the substrate site; these read RD and RADR. Residues Asp-399, His-403, Asp-440, His-441, and His-459 each coordinate Mn(2+).

The protein belongs to the BPG-independent phosphoglycerate mutase family. In terms of assembly, monomer. It depends on Mn(2+) as a cofactor.

The enzyme catalyses (2R)-2-phosphoglycerate = (2R)-3-phosphoglycerate. The protein operates within carbohydrate degradation; glycolysis; pyruvate from D-glyceraldehyde 3-phosphate: step 3/5. In terms of biological role, catalyzes the interconversion of 2-phosphoglycerate and 3-phosphoglycerate. This is 2,3-bisphosphoglycerate-independent phosphoglycerate mutase from Ruthia magnifica subsp. Calyptogena magnifica.